Consider the following 338-residue polypeptide: Aspartate-semialdehyde dehydrogenase (338 aa).

NADP(+) is bound by residues 13 to 16 (SGAV) and 41 to 42 (RS). Arg101 contacts phosphate. Catalysis depends on Cys132, which acts as the Acyl-thioester intermediate. Position 159 (Gln159) interacts with substrate. 162 to 163 (SG) contacts NADP(+). Phosphate is bound at residue Lys216. Arg238 is a substrate binding site. His245 functions as the Proton acceptor in the catalytic mechanism. Residue Asn317 participates in NADP(+) binding.

The protein belongs to the aspartate-semialdehyde dehydrogenase family. Homodimer.

The enzyme catalyses L-aspartate 4-semialdehyde + phosphate + NADP(+) = 4-phospho-L-aspartate + NADPH + H(+). It functions in the pathway amino-acid biosynthesis; L-lysine biosynthesis via DAP pathway; (S)-tetrahydrodipicolinate from L-aspartate: step 2/4. Its pathway is amino-acid biosynthesis; L-methionine biosynthesis via de novo pathway; L-homoserine from L-aspartate: step 2/3. The protein operates within amino-acid biosynthesis; L-threonine biosynthesis; L-threonine from L-aspartate: step 2/5. Its function is as follows. Catalyzes the NADPH-dependent formation of L-aspartate-semialdehyde (L-ASA) by the reductive dephosphorylation of L-aspartyl-4-phosphate. The protein is Aspartate-semialdehyde dehydrogenase of Shewanella violacea (strain JCM 10179 / CIP 106290 / LMG 19151 / DSS12).